A 96-amino-acid chain; its full sequence is Co-chaperonin GroES (96 aa).

It belongs to the GroES chaperonin family. As to quaternary structure, heptamer of 7 subunits arranged in a ring. Interacts with the chaperonin GroEL.

The protein localises to the cytoplasm. Its function is as follows. Together with the chaperonin GroEL, plays an essential role in assisting protein folding. The GroEL-GroES system forms a nano-cage that allows encapsulation of the non-native substrate proteins and provides a physical environment optimized to promote and accelerate protein folding. GroES binds to the apical surface of the GroEL ring, thereby capping the opening of the GroEL channel. This Caulobacter vibrioides (strain ATCC 19089 / CIP 103742 / CB 15) (Caulobacter crescentus) protein is Co-chaperonin GroES.